Here is a 410-residue protein sequence, read N- to C-terminus: Sensor-like histidine kinase SenX3 (410 aa).

The next 2 membrane-spanning stretches (helical) occupy residues 6 to 26 (ALLL…AVGM) and 46 to 66 (ITVS…AAVV). The Histidine kinase domain occupies 164–380 (NVSHELKTPV…TFTLALPALI (217 aa)). Position 167 is a phosphohistidine; by autocatalysis (His167). Positions 385–410 (DDERPEQAREPELRSNRSQREEELSR) are disordered.

Autophosphorylated.

It is found in the cell membrane. The enzyme catalyses ATP + protein L-histidine = ADP + protein N-phospho-L-histidine.. Member of the two-component regulatory system SenX3/RegX3. Autophosphorylates, and then transfers the phosphate group to RegX3. This chain is Sensor-like histidine kinase SenX3, found in Mycobacterium bovis (strain ATCC BAA-935 / AF2122/97).